A 216-amino-acid chain; its full sequence is Guanylate kinase (216 aa).

The Guanylate kinase-like domain maps to 11-189; the sequence is GVLIVISGPS…AVKKIEAILL (179 aa). Position 18 to 25 (18 to 25) interacts with ATP; the sequence is GPSGAGKG.

Belongs to the guanylate kinase family.

It is found in the cytoplasm. It catalyses the reaction GMP + ATP = GDP + ADP. In terms of biological role, essential for recycling GMP and indirectly, cGMP. This is Guanylate kinase (gmk) from Clostridium perfringens (strain 13 / Type A).